We begin with the raw amino-acid sequence, 1181 residues long: MESMPSFLKDTPAWEKTAPVNGIVGQEPGTSPQDGLHHGALCLGEPVPFWRGVLSAPDSWLPPGFLQGPKDTLSVVEGEGSRNGERKANWLGSKEGLRWKEAMLAHPLAFCGPACPPRYGPLIPEHSSGHPKSDPVAFRPLHCPFLLETKILERAPFWVPTCLPPYLMSSLPPERSYDWPLAPSPWVYSGSQPKVPSAFSLGSKGFYHKDPNILRPAKEPLAASESGMLGLAPGGHLQQACDAEGPSLHQRDGETGAGRQQNLCPVFLGYPDTVPRTPWPSCPPGLVHTLGNVWAGPGSNSFGYQLGPPVTPRCPSPGPPTPPGGCCSSHLPAREGDPGPCRKCQDSPEGSSSGPGESSEERNKAGSRASPPSHHTKLKKTWLTRHSEQFECPGGCPGKGESPATGLRALKRAGSPEVQGARGPAPKRPSHTFPGTGRQGARAWQETPETSTGSKAEAQQQEEQRGPRDGRIRLRESRLEDTSCQHHLAGVTQCPSCVQAAGEVEILTSHSQKSHKLPLEEKPLEEDSCATSEEGGGSSPEASINKGLAKHLLSGLGDRLCRLLRKEREALAWAQREGQGPAMTEDSPGIPHCCSRCHHGLFNTHWRCSHCSHRLCVACGRIAGAGKNREKTGSREQRTDDCAQEAGHAACSLILTQFVSSQALAELSTVMHQVWAKFDIRGHCFCQVDARVWAPGDGGQQKEPTEKTPPAPQLSCNGDSNRTKDIKEETPDSTESPAEDRAGRSPLPCPSLCELLASTAVKLCLGHERIHMAFAPVTPALPSDDRITNILDSIIAQVVERKIQEKALGPGLRAGSGLRKGLSLPLSPVRTQLSPPGALLWLQEPRPKHGFRLFQEHWRQGQPVLVSGIQKTLRLSLWGMEALGTLGGQVQTLTALGPPQPTSLDSTAFWKGFSHPEARPKLDEGSVLLLHRPLGDKDESRVENLASSLPLPEYCAHQGKLNLASYLPLGLTLHPLEPQLWAAYGVNSHRGHLGTKNLCVEVSDLISILVHAEAQLPPWYRAQKDFLSGLDGEGLWSPGSQTSTVWHVFRAQDAQRIRRFLQMVCPAGAGTLEPGAPGSCYLDSGLRRRLREEWGVSCWTLLQAPGEAVLVPAGAPHQVQGLVSTISVTQHFLSPETSALSAQLCHQGASLPPDHRMLYAQMDRAVFQAVKVAVGTLQEAK.

A compositionally biased stretch (pro residues) spans 311–323 (TPRCPSPGPPTPP). Disordered stretches follow at residues 311–378 (TPRC…HTKL), 413–472 (AGSP…DGRI), and 509–543 (SHSQKSHKLPLEEKPLEEDSCATSEEGGGSSPEAS). Positions 347-357 (SPEGSSSGPGE) are enriched in low complexity. Over residues 447 to 461 (TPETSTGSKAEAQQQ) the composition is skewed to polar residues. Over residues 462–472 (EEQRGPRDGRI) the composition is skewed to basic and acidic residues. Positions 560-564 (LCRLL) match the LXXLL motif 1 motif. The C6-type zinc-finger motif lies at 594 to 619 (CSRCHHGLFNTHWRCSHCSHRLCVAC). Residues 696–745 (GDGGQQKEPTEKTPPAPQLSCNGDSNRTKDIKEETPDSTESPAEDRAGRS) are disordered. The segment covering 721–730 (NRTKDIKEET) has biased composition (basic and acidic residues). An LXXLL motif 2 motif is present at residues 752-756 (LCELL). In terms of domain architecture, JmjC spans 938-1149 (DESRVENLAS…LSAQLCHQGA (212 aa)). Fe cation is bound by residues cysteine 999, glutamate 1001, and histidine 1117.

The cofactor is Fe(2+).

Its subcellular location is the nucleus. It catalyses the reaction N(6),N(6)-dimethyl-L-lysyl(9)-[histone H3] + 2 2-oxoglutarate + 2 O2 = L-lysyl(9)-[histone H3] + 2 formaldehyde + 2 succinate + 2 CO2. Its function is as follows. Histone demethylase that specifically demethylates both mono- and dimethylated 'Lys-9' of histone H3. May act as a transcription regulator controlling hair biology (via targeting of collagens), neural activity, and cell cycle. This Rattus norvegicus (Rat) protein is Lysine-specific demethylase hairless (Hr).